A 178-amino-acid polypeptide reads, in one-letter code: Large ribosomal subunit protein uL6 (178 aa).

It belongs to the universal ribosomal protein uL6 family. In terms of assembly, part of the 50S ribosomal subunit.

Functionally, this protein binds to the 23S rRNA, and is important in its secondary structure. It is located near the subunit interface in the base of the L7/L12 stalk, and near the tRNA binding site of the peptidyltransferase center. The chain is Large ribosomal subunit protein uL6 from Shouchella clausii (strain KSM-K16) (Alkalihalobacillus clausii).